Consider the following 1694-residue polypeptide: Homeobox-DDT domain protein RLT2 (1694 aa).

A disordered region spans residues 1–24 (MEGGSEKTTPEGCGGESKSKRKMK). Residues 17–76 (SKSKRKMKTAAQLEVLENTYSAEPYPSEAIRADLSVKLNLSDRQLQMWFCHRRLKERKST) constitute a DNA-binding region (homeobox). The 60-residue stretch at 514 to 573 (DENVANLLMVWRFLITFADVLGLWPFTLDEFAQAFHDYDPRLMGEIHIVLLKTIIKDIEG) folds into the DDT domain. The 70-residue stretch at 696 to 765 (GTVKFAAFHV…APSTYCVRAS (70 aa)) folds into the HTH HARE-type domain. Residues 795–816 (EDVDDAERDEDSESDVGEDPEV) show a composition bias toward acidic residues. 4 disordered regions span residues 795–822 (EDVD…NLKK), 1450–1541 (KQEE…ICNE), 1555–1639 (AKTS…MNMK), and 1655–1674 (EDSY…AATR). 2 positions are modified to phosphoserine: Ser-806 and Ser-808. The span at 1459 to 1470 (GLGGVSSSGRGG) shows a compositional bias: gly residues. Composition is skewed to basic residues over residues 1471-1485 (RPPR…RGNG) and 1515-1531 (GGRK…RKRP). Acidic residues-rich tracts occupy residues 1561-1578 (DNDD…DDGE), 1589-1605 (EDYD…DFDG), and 1624-1635 (DEYEEEEEEEED).

As to quaternary structure, interacts with CHR11. Interacts (via the DDT domain) with CHR11 (via C-terminus). In terms of tissue distribution, highly expressed in growing tissues such as inflorescence and flower meristems, young leaves and floral organs. Expressed in roots, rosette and cauline leaves, stems, flowers, inflorescences and siliques.

Its subcellular location is the nucleus. Transcriptional regulator required for the maintenance of the plant vegetative phase. In association with CHR11 or CHR17 may prevent the early activation of the vegetative-to-reproductive transition by regulating key genes that contribute to flower timing, such as FT, SEP1, SEP3, AGL8/FUL, SOC1 and FLC. Involved in the transcriptional regulation of seed-specific gene expression. In Arabidopsis thaliana (Mouse-ear cress), this protein is Homeobox-DDT domain protein RLT2.